The primary structure comprises 928 residues: Neuropilin-1 (928 aa).

The first 21 residues, 1 to 21 (MLLRLLSCCCWLLCSLRSSWA), serve as a signal peptide directing secretion. At 22–860 (SRNDKCGDTI…PGNVLKTLDP (839 aa)) the chain is on the extracellular side. Cystine bridges form between C27-C54, C82-C104, and C147-C173. 2 CUB domains span residues 27-141 (CGDT…YEVF) and 147-265 (CSRN…FSVV). Residue N150 is glycosylated (N-linked (GlcNAc...) asparagine). Ca(2+) is bound by residues E195, D209, and D250. Cysteines 206 and 228 form a disulfide. 3 N-linked (GlcNAc...) asparagine glycosylation sites follow: N261, N300, and N523. Intrachain disulfides connect C275–C424 and C431–C584. 2 F5/8 type C domains span residues 275–424 (CKEA…LYGC) and 431–584 (CSRM…LLGC). A glycan (O-linked (Xyl...) (chondroitin sulfate) serine; alternate) is linked at S613. A glycan (O-linked (Xyl...) (heparan sulfate) serine; alternate) is linked at S613. A disordered region spans residues 624-645 (GATGQSTETPTVEASPEEPDMT). The segment covering 625-635 (ATGQSTETPTV) has biased composition (polar residues). An MAM domain is found at 646–812 (HSDLDCKFGW…NHISPSQCRA (167 aa)). Residue S834 is glycosylated (O-linked (Xyl...) (chondroitin sulfate) serine). N844 carries N-linked (GlcNAc...) asparagine glycosylation. Residues 861-883 (ILITIIAMSALGVLLGAICGVVL) traverse the membrane as a helical segment. Topologically, residues 884–928 (YCACWHNGMSERNLSALENYNFELVDGVKLKKDKLNTQNSYSEAS) are cytoplasmic.

This sequence belongs to the neuropilin family. In terms of assembly, homodimer, and heterodimer. In terms of tissue distribution, retinal ganglion cells and visual center neurons.

It is found in the mitochondrion membrane. Its subcellular location is the cell membrane. Functionally, receptor involved in the development of the cardiovascular system, in angiogenesis, in the formation of certain neuronal circuits and in organogenesis outside the nervous system. Mediates the chemorepulsant activity of semaphorins. Binding to VEGFA initiates a signaling pathway needed for motor neuron axon guidance and cell body migration, including for the caudal migration of facial motor neurons from rhombomere 4 to rhombomere 6 during embryonic development. Regulates mitochondrial iron transport via interaction. In Xenopus laevis (African clawed frog), this protein is Neuropilin-1 (nrp1).